The following is an 89-amino-acid chain: MGFTDETVRFKLDDGDKRQISETLTAVYHSLDEKGYNPINQIVGYVLSGDPAYVPRYNDARNQIRKYERDEIVEELVRYYLQGNGIDVK.

It belongs to the UPF0297 family.

The protein is UPF0297 protein MGAS9429_Spy1808 of Streptococcus pyogenes serotype M12 (strain MGAS9429).